A 124-amino-acid chain; its full sequence is UPF0102 protein TM1040_0449 (124 aa).

This sequence belongs to the UPF0102 family.

This Ruegeria sp. (strain TM1040) (Silicibacter sp.) protein is UPF0102 protein TM1040_0449.